The following is a 279-amino-acid chain: 4-hydroxy-3-methylbut-2-enyl diphosphate reductase (279 aa).

C12 contributes to the [4Fe-4S] cluster binding site. 2 residues coordinate (2E)-4-hydroxy-3-methylbut-2-enyl diphosphate: H42 and H74. Residues H42 and H74 each coordinate dimethylallyl diphosphate. Residues H42 and H74 each coordinate isopentenyl diphosphate. Position 96 (C96) interacts with [4Fe-4S] cluster. A (2E)-4-hydroxy-3-methylbut-2-enyl diphosphate-binding site is contributed by H124. H124 contributes to the dimethylallyl diphosphate binding site. H124 is a binding site for isopentenyl diphosphate. E126 functions as the Proton donor in the catalytic mechanism. (2E)-4-hydroxy-3-methylbut-2-enyl diphosphate is bound at residue T162. A [4Fe-4S] cluster-binding site is contributed by C190. Residues S218, S219, N220, and S263 each contribute to the (2E)-4-hydroxy-3-methylbut-2-enyl diphosphate site. Dimethylallyl diphosphate contacts are provided by S218, S219, N220, and S263. Residues S218, S219, N220, and S263 each coordinate isopentenyl diphosphate.

Belongs to the IspH family. [4Fe-4S] cluster serves as cofactor.

The catalysed reaction is isopentenyl diphosphate + 2 oxidized [2Fe-2S]-[ferredoxin] + H2O = (2E)-4-hydroxy-3-methylbut-2-enyl diphosphate + 2 reduced [2Fe-2S]-[ferredoxin] + 2 H(+). It catalyses the reaction dimethylallyl diphosphate + 2 oxidized [2Fe-2S]-[ferredoxin] + H2O = (2E)-4-hydroxy-3-methylbut-2-enyl diphosphate + 2 reduced [2Fe-2S]-[ferredoxin] + 2 H(+). It functions in the pathway isoprenoid biosynthesis; dimethylallyl diphosphate biosynthesis; dimethylallyl diphosphate from (2E)-4-hydroxy-3-methylbutenyl diphosphate: step 1/1. Its pathway is isoprenoid biosynthesis; isopentenyl diphosphate biosynthesis via DXP pathway; isopentenyl diphosphate from 1-deoxy-D-xylulose 5-phosphate: step 6/6. Catalyzes the conversion of 1-hydroxy-2-methyl-2-(E)-butenyl 4-diphosphate (HMBPP) into a mixture of isopentenyl diphosphate (IPP) and dimethylallyl diphosphate (DMAPP). Acts in the terminal step of the DOXP/MEP pathway for isoprenoid precursor biosynthesis. This Alkaliphilus oremlandii (strain OhILAs) (Clostridium oremlandii (strain OhILAs)) protein is 4-hydroxy-3-methylbut-2-enyl diphosphate reductase.